We begin with the raw amino-acid sequence, 433 residues long: UDP-N-acetylmuramate--L-alanine ligase (433 aa).

108-114 (GAHGKTS) contacts ATP.

It belongs to the MurCDEF family.

The protein localises to the cytoplasm. The enzyme catalyses UDP-N-acetyl-alpha-D-muramate + L-alanine + ATP = UDP-N-acetyl-alpha-D-muramoyl-L-alanine + ADP + phosphate + H(+). The protein operates within cell wall biogenesis; peptidoglycan biosynthesis. Functionally, cell wall formation. The protein is UDP-N-acetylmuramate--L-alanine ligase of Anoxybacillus flavithermus (strain DSM 21510 / WK1).